The chain runs to 2226 residues: MVLAGLIRKLGHQLAEIRERALKSILCKIEHNLICYADLIQERLLFLHLLEWFNFPSVPMKEEVLNLLSRLVKYSPAVQHLIDLGAVEFLSKLRPNVEPVIQAEIDGILDGLFILPSEVPALCSSSYHTDQIELSQQPEVLTGYFPQDKSNFQQMEVPPGPAGNQAVKWLRFSVFPWLPLTTTDRHVLSSNESSLRSSNHTLIWNTCELLKDVIMQDFPAEIFLQRPKIVQGLLCLVKLAFGGDGKHRLALQSVSCLQQLCTSLRNRLNFYRDPNFFSSRQDTVSQNSSLSYCHEARGPYHSPNPSPGSSSSRPSVVGRTGQRPRGDGQDWDAVSSSGSSSHTHVNSRISVHSPLDVAPVDLPELEAEDTLELQFQQLSLPQFCISTLEAAAPLLRTGSREMIIRVLELLAEDMLLIGQAISSEIWDDNSLFAINVKEKLLQVLGSLGETMCYRKTSFSMEQAEAVLVHHRMAFVSISLFTVRLLQLLLPVEKASEFLPESMSAALFFVSLDMPISLEYPEIHDTVVAYLEQLDSENYSIYKRTAEAVYSIECTCNFLSDVGKEGEKNLLELVELADQALRSFSYHQHSPLIKEIICICSKIWKSAQASPLLQGESQKVFLHMLSHPLPQVKVETYQCCLEIVKECLGVQNVTKPVSSLCSGIHFLLHPKVLYEISAFGIQESKNEVNAAAKAILLYLLQGRLMMTALTWNKFIESLAPVIPVLQGYADTEDPLGNCILLLSKVSSEAGEGALPCTARLKSVLRLLLVKKPSVRSLALKLLAFHLTSEEGADKKRPFIDAGVLSRVTNLFIVKKPIDLKLDDRRELVIKLETVKKVCDIFTSDDVDLVLRKSAAEQLAVIMQDIKMHTVVKKLCLVEKIIGHLNEFVGQDGEVIECLIQPCLTLLRKVLYADPVIRVSLSQQASLLTLLLRVSLIFHEDCTVVAEVGALFCLLLFDEVSRMDTWSDTLSDKPSLSSVFSLPVSVFRRYHLPVHVTGHHAVSPYSIVLPLPTECLTLKPVSDMLRIAWNLAWYHGSDNLLKQMTSEAKIQEFLDTLQLSTEDILALKITYTDSGLKDCLQSIIQAGGHRDVRAAITRMSFYLLNDKLSLKDDIGPCGVTLKSLAWHTVLNRFLQVLPACTEDEKLLIDIIHFLNKLIKEQRKNPSIELLNWILELLLRHNPSPLLDLLVLTDSHAGEETDDVRTAVRQQLQKELISLLNSLLLVFMTVSDRKCLELFYVFQTQLSLKLLQCLRVTDAPHFYGLPSLERTLAGMAHLTAFPGWSAHSPLSKPLEICGKYLSGLLEVITSFYVERGGNAMSFMGKGVTKSTGLCLLHLSHEMIVQAPGSEWMPLWFLPLGSHSEEHAPTQQGLAWLIPLWVDRDPEVRFTSLGLGSALTTIEAGCVALANSCQNISGGLWGTVVNILLDQSECSLVRREAAFILQNLLVIPMPSEIIKDYTWQGPCVHDEDSGLSLSGKPALQALLYHCRFYEHLTHMVKHCYVGRYIFDFNFSAFTETSEYSDLNGLDDSFKFWRAPSGTSTQDHEPSSLSTSETMVAASVVSSEIQPLLPSTLLPETALDQFVTQGQREMRPVRPRDSLLSTSLNRQYVFVTPSLLSAVCSLLDNLLAVTPRDAANAFQQAHLIELLCSTVDASLIEMCIQELKTPLPLPSAVEHIQAQASFFLEYLSSLSQLLKSCLLVEPKLVTQDELLKPLITNVIRVLIVCPKDVLDVQLVLAFYRTWTHLFDLLATLLRKAGAVSLVPLTSALAKHWEAVTDTLCRCVGLSFKCPALTIASLQFLSVLLAEEEKRRVQDKDKTNEGQAPTVALLLDGTQGSLSSSERLNETILQCYEGISPKDVLKRVAANALLSLLAVSRRAQRHALRSDLIENCMEQMKHINAQLNLDLLRPGKAVLKKKEDGFIKELSITMQLLRNCLYQNEECKVAALEARLVPVLHSLWPWLLMEDSLMQIALQLLCVYTANFPAGCSSLCWSNYGQCIQTAHRGTPSSSLILCILKLASQMPAENTTIQQLVFMFLSNLALSHDCKGVIQKSNFLQHFLSLTLPKGGNQHLSTVAILWLKLLLNMSFGEDGQQMILRLDGCLDLLIEMSKYKHKSSPHMPLLIFHNICFSPANKPKILANEKVVTLLAACLESENQTAQRIGAASLWALTYNYQKAKATLKNPSIKRKVDEAYSIAKRTLSNSEENPLNSYYLKCLENLVQLLNYS.

The disordered stretch occupies residues 295 to 346 (EARGPYHSPNPSPGSSSSRPSVVGRTGQRPRGDGQDWDAVSSSGSSSHTHVN). Positions 307-319 (PGSSSSRPSVVGR) are enriched in low complexity. At Ser-311 the chain carries Phosphoserine. Lys-813 is modified (N6-acetyllysine).

The protein belongs to the rotatin family. As to quaternary structure, interacts with PPP1R35; this interaction allows the mutual recruitment to the centriole.

Its subcellular location is the cytoplasm. The protein resides in the cytoskeleton. The protein localises to the cilium basal body. Its function is as follows. Involved in the genetic cascade that governs left-right specification. Required for correct asymmetric expression of NODAL, LEFTY and PITX2. The sequence is that of Rotatin from Mus musculus (Mouse).